The following is a 293-amino-acid chain: 33 kDa chaperonin (293 aa).

Disulfide bonds link Cys-230–Cys-232 and Cys-263–Cys-266.

The protein belongs to the HSP33 family. Under oxidizing conditions two disulfide bonds are formed involving the reactive cysteines. Under reducing conditions zinc is bound to the reactive cysteines and the protein is inactive.

The protein localises to the cytoplasm. Functionally, redox regulated molecular chaperone. Protects both thermally unfolding and oxidatively damaged proteins from irreversible aggregation. Plays an important role in the bacterial defense system toward oxidative stress. The chain is 33 kDa chaperonin from Edwardsiella ictaluri (strain 93-146).